The sequence spans 142 residues: ATP synthase epsilon chain, chloroplastic (142 aa).

This sequence belongs to the ATPase epsilon chain family. In terms of assembly, F-type ATPases have 2 components, CF(1) - the catalytic core - and CF(0) - the membrane proton channel. CF(1) has five subunits: alpha(3), beta(3), gamma(1), delta(1), epsilon(1). CF(0) has three main subunits: a, b and c.

The protein resides in the plastid. It localises to the chloroplast thylakoid membrane. In terms of biological role, produces ATP from ADP in the presence of a proton gradient across the membrane. The polypeptide is ATP synthase epsilon chain, chloroplastic (Ostreococcus tauri).